The following is a 316-amino-acid chain: 4-hydroxyphenylacetate decarboxylase activating enzyme (316 aa).

The Radical SAM core domain occupies 20–307; sequence HDGPGCRTTV…QDIFLDNGIA (288 aa). Residues Cys-34, Cys-38, Cys-41, Cys-60, Cys-66, Cys-69, and Cys-105 each coordinate [4Fe-4S] cluster. 40 to 42 provides a ligand contact to S-adenosyl-L-methionine; it reads WCA. Residues 84–115 enclose the 4Fe-4S ferredoxin-type domain; the sequence is NKPVIDWNICKDCESFECVNSCYYNAFKLCAK. Residues Gly-144, 193–195, and His-267 contribute to the S-adenosyl-L-methionine site; that span reads DIK.

Belongs to the organic radical-activating enzymes family. Monomer. [4Fe-4S] cluster serves as cofactor.

The catalysed reaction is glycyl-[protein] + reduced [flavodoxin] + S-adenosyl-L-methionine = glycin-2-yl radical-[protein] + semiquinone [flavodoxin] + 5'-deoxyadenosine + L-methionine + H(+). Catalyzes activation of 4-hydroxyphenylacetate decarboxylase under anaerobic conditions by generation of an organic free radical on a glycine residue, via a homolytic cleavage of S-adenosyl-L-methionine (SAM). The protein is 4-hydroxyphenylacetate decarboxylase activating enzyme of Clostridioides difficile (strain 630) (Peptoclostridium difficile).